Consider the following 1136-residue polypeptide: Unconventional myosin-Ib (1136 aa).

Positions 15 to 701 (IGVGDTVLLE…TLFQLEDLRK (687 aa)) constitute a Myosin motor domain. Ser-60 is modified (phosphoserine). Position 108–115 (108–115 (GESGAGKT)) interacts with ATP. Residue Lys-287 forms a Glycyl lysine isopeptide (Lys-Gly) (interchain with G-Cter in SUMO1); alternate linkage. Lys-287 participates in a covalent cross-link: Glycyl lysine isopeptide (Lys-Gly) (interchain with G-Cter in SUMO2); alternate. The actin-binding stretch occupies residues 592-599 (YIRCIKPN). IQ domains follow at residues 704-729 (LEDLATLIQKIYRGWKCRTHFLLMKR), 730-750 (SQVVIAAWYRRYAQQKRYQQI), 750-778 (IKSSALVIQSYIRGWKARKILRELKHQKR), 780-807 (KEAATTIAAYWHGTQARKERRRLKDEAR), 808-837 (NKHAIAVIWAFWLGSKARRELKRLKEEARR), and 837-866 (RKHAVAVIWAYWLGLKVRREYRKFFRANAG). Residues 952–1136 (KALYPSSVGQ…NNRLLEVAVP (185 aa)) form the TH1 domain.

The protein belongs to the TRAFAC class myosin-kinesin ATPase superfamily. Myosin family.

Motor protein that may participate in process critical to neuronal development and function such as cell migration, neurite outgrowth and vesicular transport. This Rattus norvegicus (Rat) protein is Unconventional myosin-Ib (Myo1b).